The following is a 104-amino-acid chain: Large ribosomal subunit protein uL24 (104 aa).

Basic and acidic residues predominate over residues 82–92; the sequence is RIGYRTDENGK. Residues 82–104 form a disordered region; that stretch reads RIGYRTDENGKRVRISRRNGKDI. The segment covering 93–104 has biased composition (basic residues); it reads RVRISRRNGKDI.

It belongs to the universal ribosomal protein uL24 family. In terms of assembly, part of the 50S ribosomal subunit.

Functionally, one of two assembly initiator proteins, it binds directly to the 5'-end of the 23S rRNA, where it nucleates assembly of the 50S subunit. Its function is as follows. One of the proteins that surrounds the polypeptide exit tunnel on the outside of the subunit. This Nocardia farcinica (strain IFM 10152) protein is Large ribosomal subunit protein uL24.